The sequence spans 302 residues: Troponin T, cardiac muscle isoforms (302 aa).

A compositionally biased stretch (acidic residues) spans 1 to 55 (MSDSEEVVEEYEQEQEEEYVEEEEEEWLEEDDGQEDQVDEEEEETEETTAEEQED). 3 disordered regions span residues 1-99 (MSDS…GERL), 138-230 (KDRI…RKPL), and 280-302 (SDHQKVKGSKAARGKTMVGGRWK). Ser-2 carries the post-translational modification N-acetylserine. At Ser-2 the chain carries Phosphoserine; by CK2. Over residues 65 to 79 (EGDREQEPGEGESKP) the composition is skewed to basic and acidic residues. The span at 82–93 (KPFMPNLVPPKI) shows a compositional bias: pro residues. Composition is skewed to basic and acidic residues over residues 138 to 186 (KDRI…EKEA) and 204 to 230 (KSEKKGGKKQTEREKKKKILSERRKPL).

The protein belongs to the troponin T family.

Troponin T is the tropomyosin-binding subunit of troponin, the thin filament regulatory complex which confers calcium-sensitivity to striated muscle actomyosin ATPase activity. This chain is Troponin T, cardiac muscle isoforms (TNNT2), found in Gallus gallus (Chicken).